Reading from the N-terminus, the 181-residue chain is GATA zinc finger domain-containing protein 22 (181 aa).

A GATA-type zinc finger spans residues 118-145 (CQICLTNNTPYWRWSVIENNKIRVCNRC).

The polypeptide is GATA zinc finger domain-containing protein 22 (gtaV) (Dictyostelium discoideum (Social amoeba)).